We begin with the raw amino-acid sequence, 431 residues long: Serine hydroxymethyltransferase 2 (431 aa).

(6S)-5,6,7,8-tetrahydrofolate contacts are provided by residues L131 and 135–137 (GHL). K240 is modified (N6-(pyridoxal phosphate)lysine).

The protein belongs to the SHMT family. In terms of assembly, homodimer. The cofactor is pyridoxal 5'-phosphate.

It is found in the cytoplasm. It carries out the reaction (6R)-5,10-methylene-5,6,7,8-tetrahydrofolate + glycine + H2O = (6S)-5,6,7,8-tetrahydrofolate + L-serine. The protein operates within one-carbon metabolism; tetrahydrofolate interconversion. It participates in amino-acid biosynthesis; glycine biosynthesis; glycine from L-serine: step 1/1. Catalyzes the reversible interconversion of serine and glycine with tetrahydrofolate (THF) serving as the one-carbon carrier. This reaction serves as the major source of one-carbon groups required for the biosynthesis of purines, thymidylate, methionine, and other important biomolecules. Also exhibits THF-independent aldolase activity toward beta-hydroxyamino acids, producing glycine and aldehydes, via a retro-aldol mechanism. The polypeptide is Serine hydroxymethyltransferase 2 (Photobacterium profundum (strain SS9)).